A 61-amino-acid chain; its full sequence is Small ribosomal subunit protein uS14 (61 aa).

4 residues coordinate Zn(2+): cysteine 24, cysteine 27, cysteine 40, and cysteine 43.

This sequence belongs to the universal ribosomal protein uS14 family. Zinc-binding uS14 subfamily. As to quaternary structure, part of the 30S ribosomal subunit. Contacts proteins S3 and S10. It depends on Zn(2+) as a cofactor.

Its function is as follows. Binds 16S rRNA, required for the assembly of 30S particles and may also be responsible for determining the conformation of the 16S rRNA at the A site. The polypeptide is Small ribosomal subunit protein uS14 (Dictyoglomus turgidum (strain DSM 6724 / Z-1310)).